A 414-amino-acid chain; its full sequence is TAR DNA-binding protein 43 (414 aa).

Residues Lys79, Lys84, Lys95, Lys102, and Lys181 each participate in a glycyl lysine isopeptide (Lys-Gly) (interchain with G-Cter in SUMO2) cross-link. RRM domains lie at 104–200 (SDLI…RCTE) and 191–262 (RKVF…NAEP). Residue Ser183 is modified to Phosphoserine. The interval 216–414 (EVVDVFIPKP…MDSKSSGWGM (199 aa)) is interaction with UBQLN2. The span at 261–274 (EPKHNSNRQLERSG) shows a compositional bias: basic and acidic residues. Disordered stretches follow at residues 261–301 (EPKH…GLGN) and 341–414 (ASQQ…GWGM). Lys263 is covalently cross-linked (Glycyl lysine isopeptide (Lys-Gly) (interchain with G-Cter in SUMO2)). Over residues 275–301 (RFGGNPGGFGNQGGFGNSRGGGAGLGN) the composition is skewed to gly residues. Ser292 carries the phosphoserine modification. Arg293 is modified (omega-N-methylarginine). Composition is skewed to low complexity over residues 342–358 (SQQN…SQGS) and 368–392 (GSGN…SNAG). A compositionally biased stretch (gly residues) spans 393 to 402 (SGSGFNGGFG). Polar residues predominate over residues 405–414 (MDSKSSGWGM).

In terms of assembly, homodimer. Homooligomer (via its N-terminal domain). Interacts with BRDT. Binds specifically to pyrimidine-rich motifs of TAR DNA and to single stranded TG repeated sequences. Binds to RNA, specifically to UG repeated sequences with a minimum of six contiguous repeats. Interacts with ATXN2; the interaction is RNA-dependent. Interacts with MATR3. Interacts with UBQLN2. Interacts with HNRNPA2B1. Interacts with ZNF106. Interacts with CNOT7/CAF1. Interacts with CRY2. Interacts with PPIA/CYPA; the interaction is dependent on RNA-binding activity of TARDBP and PPIase activity of PPIA/CYPA. Acetylation of PPIA/CYPA at 'Lys-125' favors the interaction of TARDBP with PPIA/CYPA. In terms of processing, hyperphosphorylated. Ubiquitinated.

It is found in the nucleus. The protein localises to the cytoplasm. The protein resides in the stress granule. Its subcellular location is the mitochondrion. Functionally, RNA-binding protein that is involved in various steps of RNA biogenesis and processing. Preferentially binds, via its two RNA recognition motifs RRM1 and RRM2, to GU-repeats on RNA molecules predominantly localized within long introns and in the 3'UTR of mRNAs. In turn, regulates the splicing of many non-coding and protein-coding RNAs including proteins involved in neuronal survival, as well as mRNAs that encode proteins relevant for neurodegenerative diseases. Plays a role in maintaining mitochondrial homeostasis by regulating the processing of mitochondrial transcripts. Also regulates mRNA stability by recruiting CNOT7/CAF1 deadenylase on mRNA 3'UTR leading to poly(A) tail deadenylation and thus shortening. In response to oxidative insult, associates with stalled ribosomes localized to stress granules (SGs) and contributes to cell survival. Also participates in the normal skeletal muscle formation and regeneration, forming cytoplasmic myo-granules and binding mRNAs that encode sarcomeric proteins. Plays a role in the maintenance of the circadian clock periodicity via stabilization of the CRY1 and CRY2 proteins in a FBXL3-dependent manner. Negatively regulates the expression of CDK6. Regulates the expression of HDAC6, ATG7 and VCP in a PPIA/CYPA-dependent manner. This is TAR DNA-binding protein 43 (Tardbp) from Mus musculus (Mouse).